The chain runs to 283 residues: Prepilin leader peptidase/N-methyltransferase (283 aa).

7 helical membrane-spanning segments follow: residues 13 to 33 (VWLL…NVVI), 106 to 126 (WRYP…GLLW), 128 to 148 (PGLA…LAAI), 153 to 173 (QLLP…FNLA), 176 to 196 (FVPL…LWLI), 216 to 236 (LLAA…VLIA), and 259 to 279 (LAFG…NVLG).

This sequence belongs to the peptidase A24 family.

It localises to the cell inner membrane. It carries out the reaction Typically cleaves a -Gly-|-Phe- bond to release an N-terminal, basic peptide of 5-8 residues from type IV prepilin, and then N-methylates the new N-terminal amino group, the methyl donor being S-adenosyl-L-methionine.. Functionally, plays a role in type II pseudopili formation by proteolytically removing the leader sequence from substrate proteins and subsequently monomethylating the alpha-amino group of the newly exposed N-terminal phenylalanine. Substrates include proteins required for biogenesis of the type II general secretory apparatus. This is Prepilin leader peptidase/N-methyltransferase (outO) from Dickeya chrysanthemi (Pectobacterium chrysanthemi).